The primary structure comprises 38 residues: Photosystem II reaction center protein L (38 aa).

A helical membrane pass occupies residues 17–37 (SLYWGLLLIFVLAILFSSYIF).

It belongs to the PsbL family. As to quaternary structure, PSII is composed of 1 copy each of membrane proteins PsbA, PsbB, PsbC, PsbD, PsbE, PsbF, PsbH, PsbI, PsbJ, PsbK, PsbL, PsbM, PsbT, PsbX, PsbY, PsbZ, Psb30/Ycf12, at least 3 peripheral proteins of the oxygen-evolving complex and a large number of cofactors. It forms dimeric complexes.

It localises to the plastid. The protein resides in the chloroplast thylakoid membrane. One of the components of the core complex of photosystem II (PSII). PSII is a light-driven water:plastoquinone oxidoreductase that uses light energy to abstract electrons from H(2)O, generating O(2) and a proton gradient subsequently used for ATP formation. It consists of a core antenna complex that captures photons, and an electron transfer chain that converts photonic excitation into a charge separation. This subunit is found at the monomer-monomer interface and is required for correct PSII assembly and/or dimerization. The polypeptide is Photosystem II reaction center protein L (Nephroselmis olivacea (Green alga)).